Consider the following 580-residue polypeptide: Kelch-like protein 38 (580 aa).

A BTB domain is found at 34–101 (TDVSICSGAC…VYTGEVHISA (68 aa)). Residues 136–237 (CLGLVRLAEI…HPAFFHHFIA (102 aa)) enclose the BACK domain. 6 Kelch repeats span residues 284–331 (FLLL…TLHR), 333–382 (VYVL…THRN), 383–430 (FIFS…VKDQ), 432–478 (LYLF…VLGE), 479–520 (KIII…VMGN), and 522–572 (LYVT…TLQC).

The polypeptide is Kelch-like protein 38 (Klhl38) (Rattus norvegicus (Rat)).